A 119-amino-acid polypeptide reads, in one-letter code: Probable non-functional T cell receptor gamma variable 11 (119 aa).

The first 18 residues, M1–G18, serve as a signal peptide directing secretion. Positions P23 to H119 constitute an Ig-like domain. The N-linked (GlcNAc...) asparagine glycan is linked to N32.

As to quaternary structure, most probably, the gamma-delta TR is not assembled due to incorrect folding of the gamma chain. Gamma-delta TR is a heterodimer composed of a gamma and delta chain; disulfide-linked. The gamma-delta TR is associated with the transmembrane signaling CD3 coreceptor proteins following the stoichiometry: a single gamma-delta TR heterodimer associates with one CD3D-CD3E heterodimer, one CD3G-CD3E heterodimer and one CD247 homodimer forming a stable octameric structure. Upon activation, gamma-delta TR complex associates with FCER1G to initiate intracellular signaling.

It localises to the cell membrane. Probable non-functional open reading frame (ORF) of V region of the variable domain of T cell receptor (TR) gamma chain. Non-functional ORF generally cannot participate in the synthesis of a productive T cell receptor (TR) chain due to altered V-(D)-J or switch recombination and/or splicing site (at mRNA level) and/or conserved amino acid change (protein level). Gamma-delta TRs recognize a variety of self and foreign non-peptide antigens frequently expressed at the epithelial boundaries between the host and external environment, including endogenous lipids presented by MH-like protein CD1D and phosphoantigens presented by butyrophilin-like molecule BTN3A1. Upon antigen recognition induces rapid, innate-like immune responses involved in pathogen clearance and tissue repair. Binding of gamma-delta TR complex to antigen triggers phosphorylation of immunoreceptor tyrosine-based activation motifs (ITAMs) in the CD3 chains by the LCK and FYN kinases, allowing the recruitment, phosphorylation, and activation of ZAP70 that facilitates phosphorylation of the scaffolding proteins LCP2 and LAT. This lead to the formation of a supramolecular signalosome that recruits the phospholipase PLCG1, resulting in calcium mobilization and ERK activation, ultimately leading to T cell expansion and differentiation into effector cells. Gamma-delta TRs are produced through somatic rearrangement of a limited repertoire of variable (V), diversity (D), and joining (J) genes. The potential diversity of gamma-delta TRs is conferred by the unique ability to rearrange (D) genes in tandem and to utilize all three reading frames. The combinatorial diversity is considerably increased by the sequence exonuclease trimming and random nucleotide (N) region additions which occur during the V-(D)-J rearrangements. In Homo sapiens (Human), this protein is Probable non-functional T cell receptor gamma variable 11.